A 359-amino-acid chain; its full sequence is Guanine nucleotide-binding protein subunit alpha-11 (359 aa).

Residues C9 and C10 are each lipidated (S-palmitoyl cysteine). The G-alpha domain occupies 38 to 359; the sequence is RELKLLLLGT…QLNLKEYNLV (322 aa). The segment at 41–54 is G1 motif; the sequence is KLLLLGTGESGKST. Residues 46–53 and 180–183 each bind GTP; these read GTGESGKS and LRVR. A Mg(2+)-binding site is contributed by S53. Residues 178-186 form a G2 motif region; sequence DVLRVRVPT. A Mg(2+)-binding site is contributed by T186. A G3 motif region spans residues 201 to 210; the sequence is FRMVDVGGQR. The interval 270 to 277 is G4 motif; it reads ILFLNKKD. GTP is bound by residues 274–277 and A331; that span reads NKKD. Positions 329 to 334 are G5 motif; it reads TCATDT.

Belongs to the G-alpha family. G(q) subfamily. In terms of assembly, g proteins are composed of 3 units; alpha, beta and gamma. The alpha chain contains the guanine nucleotide binding site. Interacts with RGS22. Interacts with NTSR1.

Its subcellular location is the cell membrane. The protein localises to the cytoplasm. It catalyses the reaction GTP + H2O = GDP + phosphate + H(+). Guanine nucleotide-binding proteins (G proteins) function as transducers downstream of G protein-coupled receptors (GPCRs) in numerous signaling cascades. The alpha chain contains the guanine nucleotide binding site and alternates between an active, GTP-bound state and an inactive, GDP-bound state. Signaling by an activated GPCR promotes GDP release and GTP binding. The alpha subunit has a low GTPase activity that converts bound GTP to GDP, thereby terminating the signal. Both GDP release and GTP hydrolysis are modulated by numerous regulatory proteins. Signaling is mediated via phospholipase C-beta-dependent inositol lipid hydrolysis for signal propagation: activates phospholipase C-beta: following GPCR activation, GNA11 activates PLC-beta (PLCB1, PLCB2, PLCB3 or PLCB4), leading to production of diacylglycerol (DAG) and inositol 1,4,5-trisphosphate (IP3). Transduces FFAR4 signaling in response to long-chain fatty acids (LCFAs). Together with GNAQ, required for heart development. In the respiratory epithelium, transmits OXGR1-dependent signals that lead to downstream intracellular Ca(2+) release and mucocilliary clearance of airborne pathogens. This Rattus norvegicus (Rat) protein is Guanine nucleotide-binding protein subunit alpha-11 (Gna11).